Consider the following 122-residue polypeptide: LYR motif-containing protein 1 (122 aa).

Belongs to the complex I LYR family.

In terms of biological role, may promote cell proliferation and inhibition of apoptosis of preadipocytes. The chain is LYR motif-containing protein 1 (Lyrm1) from Mus musculus (Mouse).